We begin with the raw amino-acid sequence, 509 residues long: Hexokinase-4, chloroplastic (509 aa).

A chloroplast-targeting transit peptide spans 1 to 37 (MSAAAAIASPIPAAIAVVQQQRRGRSRGGGSGAAAVR). Positions 45 to 496 (SAIAPILADL…SGIGAALLAA (452 aa)) constitute a Hexokinase domain. The interval 100 to 238 (TGNETGLFYA…GLDMRVSALV (139 aa)) is hexokinase small subdomain. The ADP site is built by Gly-114, Thr-115, and Asn-116. D-glucose is bound by residues Thr-204, Lys-205, Asn-239, and Asp-240. The segment at 239 to 485 (NDTVGTLAGA…NRIAIEHTKD (247 aa)) is hexokinase large subdomain. Thr-263 contacts ADP. The D-glucose site is built by Asn-266, Glu-294, and Glu-324. Gly-450 serves as a coordination point for ADP.

This sequence belongs to the hexokinase family. In terms of tissue distribution, expressed in roots, leaves, flowers, immature seeds, endosperm and seed coat.

It localises to the plastid. The protein localises to the chloroplast stroma. It catalyses the reaction a D-hexose + ATP = a D-hexose 6-phosphate + ADP + H(+). The catalysed reaction is D-fructose + ATP = D-fructose 6-phosphate + ADP + H(+). It carries out the reaction D-glucose + ATP = D-glucose 6-phosphate + ADP + H(+). The protein operates within carbohydrate metabolism; hexose metabolism. It functions in the pathway carbohydrate degradation; glycolysis; D-glyceraldehyde 3-phosphate and glycerone phosphate from D-glucose: step 1/4. Its function is as follows. Fructose and glucose phosphorylating enzyme. This chain is Hexokinase-4, chloroplastic (HXK4), found in Oryza sativa subsp. japonica (Rice).